The primary structure comprises 81 residues: Serine rich endogenous peptide 21 (81 aa).

Residues 1–40 (MLELHFEFIDLNQPKMYKFVVCLLTLSFLLLSGLSNTALA) form the signal peptide. An SCOOP motif motif is present at residues 65-79 (KVRVLPSASRRGPGQ). The short motif at 71 to 73 (SAS) is the SxS motif essential for MIK2 binding element.

Belongs to the serine rich endogenous peptide (SCOOP) phytocytokine family. Interacts with MIK2 (via extracellular leucine-rich repeat domain); this interaction triggers the formation of complex between MIK2 and the BAK1/SERK3 and SERK4 coreceptors, and subsequent BAK1 activation by phosphorylation.

Its subcellular location is the cell membrane. It localises to the secreted. The protein localises to the extracellular space. It is found in the apoplast. Functionally, brassicaceae-specific phytocytokine (plant endogenous peptide released into the apoplast) perceived by MIK2 in a BAK1/SERK3 and SERK4 coreceptors-dependent manner, that modulates various physiological and antimicrobial processes including growth prevention and reactive oxygen species (ROS) response regulation. The chain is Serine rich endogenous peptide 21 from Arabidopsis thaliana (Mouse-ear cress).